Here is a 313-residue protein sequence, read N- to C-terminus: Thiamine thiazole synthase (313 aa).

Residues A71, 92–93 (EA), G100, and V165 each bind substrate. C199 bears the 2,3-didehydroalanine (Cys) mark. Substrate is bound by residues D201, H216, M268, and 278 to 280 (RMG).

It belongs to the THI4 family. In terms of assembly, homooctamer. The cofactor is Fe cation. Post-translationally, during the catalytic reaction, a sulfide is transferred from Cys-199 to a reaction intermediate, generating a dehydroalanine residue.

It localises to the cytoplasm. It is found in the nucleus. The enzyme catalyses [ADP-thiazole synthase]-L-cysteine + glycine + NAD(+) = [ADP-thiazole synthase]-dehydroalanine + ADP-5-ethyl-4-methylthiazole-2-carboxylate + nicotinamide + 3 H2O + 2 H(+). Its function is as follows. Involved in biosynthesis of the thiamine precursor thiazole. Catalyzes the conversion of NAD and glycine to adenosine diphosphate 5-(2-hydroxyethyl)-4-methylthiazole-2-carboxylic acid (ADT), an adenylated thiazole intermediate. The reaction includes an iron-dependent sulfide transfer from a conserved cysteine residue of the protein to a thiazole intermediate. The enzyme can only undergo a single turnover, which suggests it is a suicide enzyme. May have additional roles in adaptation to various stress conditions and in DNA damage tolerance. This chain is Thiamine thiazole synthase, found in Coprinopsis cinerea (strain Okayama-7 / 130 / ATCC MYA-4618 / FGSC 9003) (Inky cap fungus).